The sequence spans 517 residues: Putative thymidine phosphorylase (517 aa).

The protein belongs to the thymidine/pyrimidine-nucleoside phosphorylase family. Type 2 subfamily.

The enzyme catalyses thymidine + phosphate = 2-deoxy-alpha-D-ribose 1-phosphate + thymine. This chain is Putative thymidine phosphorylase, found in Legionella pneumophila (strain Corby).